The chain runs to 155 residues: S-ribosylhomocysteine lyase (155 aa).

The Fe cation site is built by histidine 57, histidine 61, and cysteine 124.

It belongs to the LuxS family. In terms of assembly, homodimer. It depends on Fe cation as a cofactor.

The catalysed reaction is S-(5-deoxy-D-ribos-5-yl)-L-homocysteine = (S)-4,5-dihydroxypentane-2,3-dione + L-homocysteine. Involved in the synthesis of autoinducer 2 (AI-2) which is secreted by bacteria and is used to communicate both the cell density and the metabolic potential of the environment. The regulation of gene expression in response to changes in cell density is called quorum sensing. Catalyzes the transformation of S-ribosylhomocysteine (RHC) to homocysteine (HC) and 4,5-dihydroxy-2,3-pentadione (DPD). This Listeria monocytogenes serovar 1/2a (strain ATCC BAA-679 / EGD-e) protein is S-ribosylhomocysteine lyase.